The sequence spans 302 residues: Deoxyhypusine hydroxylase (302 aa).

6 HEAT-like PBS-type repeats span residues glutamate 23–aspartate 49, leucine 54–aspartate 80, valine 87–aspartate 113, aspartate 175–aspartate 201, phenylalanine 206–aspartate 232, and valine 239–aspartate 265. The Fe cation site is built by histidine 56, glutamate 57, histidine 89, and glutamate 90. Positions 208, 209, 241, and 242 each coordinate Fe cation.

Belongs to the deoxyhypusine hydroxylase family. It depends on Fe(2+) as a cofactor.

The protein localises to the endoplasmic reticulum membrane. It carries out the reaction [eIF5A protein]-deoxyhypusine + AH2 + O2 = [eIF5A protein]-hypusine + A + H2O. The protein operates within protein modification; eIF5A hypusination. Catalyzes the hydroxylation of the N(6)-(4-aminobutyl)-L-lysine intermediate to form hypusine, an essential post-translational modification only found in mature eIF-5A factor. Essential for organismal viability and plays a role in a wide number of important processes such as cell growth and proliferation, and regulates induction of autophagy and protein synthesis. Has a role in eIF-5A-mediated translational control. This chain is Deoxyhypusine hydroxylase, found in Drosophila melanogaster (Fruit fly).